Here is a 404-residue protein sequence, read N- to C-terminus: Cysteine desulfurase IscS (404 aa).

Pyridoxal 5'-phosphate is bound by residues 75 to 76 (AT), Asn-155, Gln-183, and 203 to 205 (SAH). Position 206 is an N6-(pyridoxal phosphate)lysine (Lys-206). Thr-243 lines the pyridoxal 5'-phosphate pocket. Cys-328 (cysteine persulfide intermediate) is an active-site residue. Cys-328 lines the [2Fe-2S] cluster pocket.

This sequence belongs to the class-V pyridoxal-phosphate-dependent aminotransferase family. NifS/IscS subfamily. As to quaternary structure, homodimer. Forms a heterotetramer with IscU, interacts with other sulfur acceptors. Pyridoxal 5'-phosphate serves as cofactor.

The protein resides in the cytoplasm. It catalyses the reaction (sulfur carrier)-H + L-cysteine = (sulfur carrier)-SH + L-alanine. It participates in cofactor biosynthesis; iron-sulfur cluster biosynthesis. Functionally, master enzyme that delivers sulfur to a number of partners involved in Fe-S cluster assembly, tRNA modification or cofactor biosynthesis. Catalyzes the removal of elemental sulfur atoms from cysteine to produce alanine. Functions as a sulfur delivery protein for Fe-S cluster synthesis onto IscU, an Fe-S scaffold assembly protein, as well as other S acceptor proteins. The polypeptide is Cysteine desulfurase IscS (Aeromonas hydrophila subsp. hydrophila (strain ATCC 7966 / DSM 30187 / BCRC 13018 / CCUG 14551 / JCM 1027 / KCTC 2358 / NCIMB 9240 / NCTC 8049)).